We begin with the raw amino-acid sequence, 281 residues long: Pantothenate synthetase (281 aa).

29–36 (MGYLHEGH) is a binding site for ATP. The active-site Proton donor is H36. Residue Q60 participates in (R)-pantoate binding. Position 60 (Q60) interacts with beta-alanine. 146–149 (GQKD) contributes to the ATP binding site. Position 152 (Q152) interacts with (R)-pantoate. ATP-binding positions include V175 and 183 to 186 (MSSR).

The protein belongs to the pantothenate synthetase family. Homodimer.

It localises to the cytoplasm. It catalyses the reaction (R)-pantoate + beta-alanine + ATP = (R)-pantothenate + AMP + diphosphate + H(+). It functions in the pathway cofactor biosynthesis; (R)-pantothenate biosynthesis; (R)-pantothenate from (R)-pantoate and beta-alanine: step 1/1. In terms of biological role, catalyzes the condensation of pantoate with beta-alanine in an ATP-dependent reaction via a pantoyl-adenylate intermediate. The chain is Pantothenate synthetase from Pseudothermotoga lettingae (strain ATCC BAA-301 / DSM 14385 / NBRC 107922 / TMO) (Thermotoga lettingae).